Consider the following 236-residue polypeptide: Ribose-5-phosphate isomerase A 2 (236 aa).

Substrate contacts are provided by residues 31-34, 86-89, and 99-102; these read SGTT, DGPD, and KGGG. Catalysis depends on Glu-108, which acts as the Proton acceptor. Lys-126 serves as a coordination point for substrate.

This sequence belongs to the ribose 5-phosphate isomerase family. Homodimer.

The catalysed reaction is aldehydo-D-ribose 5-phosphate = D-ribulose 5-phosphate. Its pathway is carbohydrate degradation; pentose phosphate pathway; D-ribose 5-phosphate from D-ribulose 5-phosphate (non-oxidative stage): step 1/1. Catalyzes the reversible conversion of ribose-5-phosphate to ribulose 5-phosphate. The chain is Ribose-5-phosphate isomerase A 2 from Yersinia pestis.